The chain runs to 143 residues: Large ribosomal subunit protein uL13 (143 aa).

Belongs to the universal ribosomal protein uL13 family. In terms of assembly, part of the 50S ribosomal subunit.

In terms of biological role, this protein is one of the early assembly proteins of the 50S ribosomal subunit, although it is not seen to bind rRNA by itself. It is important during the early stages of 50S assembly. This chain is Large ribosomal subunit protein uL13, found in Prochlorococcus marinus (strain MIT 9301).